A 356-amino-acid polypeptide reads, in one-letter code: tRNA N6-adenosine threonylcarbamoyltransferase (356 aa).

Residues His115 and His119 each contribute to the Fe cation site. Substrate is bound by residues Leu138–Gly142, Asp171, Gly184, and Asn283. Position 311 (Asp311) interacts with Fe cation.

This sequence belongs to the KAE1 / TsaD family. The cofactor is Fe(2+).

The protein localises to the cytoplasm. The enzyme catalyses L-threonylcarbamoyladenylate + adenosine(37) in tRNA = N(6)-L-threonylcarbamoyladenosine(37) in tRNA + AMP + H(+). Required for the formation of a threonylcarbamoyl group on adenosine at position 37 (t(6)A37) in tRNAs that read codons beginning with adenine. Is involved in the transfer of the threonylcarbamoyl moiety of threonylcarbamoyl-AMP (TC-AMP) to the N6 group of A37, together with TsaE and TsaB. TsaD likely plays a direct catalytic role in this reaction. In Prochlorococcus marinus (strain MIT 9312), this protein is tRNA N6-adenosine threonylcarbamoyltransferase.